Reading from the N-terminus, the 65-residue chain is UPF0434 protein RPB_0294 (65 aa).

It belongs to the UPF0434 family.

The polypeptide is UPF0434 protein RPB_0294 (Rhodopseudomonas palustris (strain HaA2)).